Here is a 403-residue protein sequence, read N- to C-terminus: Aloesone synthase (403 aa).

Residue cysteine 174 is part of the active site. Residues serine 281 and 318–321 each bind CoA; that span reads GGRA.

It belongs to the thiolase-like superfamily. Chalcone/stilbene synthases family. Homodimer.

The protein operates within secondary metabolite biosynthesis; flavonoid biosynthesis. Its function is as follows. Catalyzes the iterative condensations of 6, 7 or 8 molecules of malonyl-CoA to produce various aromatic polyketides. Produces the heptaketide aloesone, the aglycone of aloesin, from 7 molecules of malonyl-CoA as a major product. Also able to produce a hexaketide pyrone, a heptaketide 6-(2-acetyl-3,5-dihydroxybenzyl)-4-hydroxy-2-pyrone, a novel heptaketide 6-(2-(2,4-dihydroxy-6-methylphenyl)-2-oxoethyl)-4-hydroxy-2-pyrone and octaketides SEK4/SEK4b. This Aloe arborescens (Kidachi aloe) protein is Aloesone synthase (PKS3).